A 111-amino-acid polypeptide reads, in one-letter code: Large ribosomal subunit protein uL23 (111 aa).

Belongs to the universal ribosomal protein uL23 family. Part of the 50S ribosomal subunit. Contacts protein L29, and trigger factor when it is bound to the ribosome.

Functionally, one of the early assembly proteins it binds 23S rRNA. One of the proteins that surrounds the polypeptide exit tunnel on the outside of the ribosome. Forms the main docking site for trigger factor binding to the ribosome. This Chlamydia caviae (strain ATCC VR-813 / DSM 19441 / 03DC25 / GPIC) (Chlamydophila caviae) protein is Large ribosomal subunit protein uL23.